The chain runs to 175 residues: Large ribosomal subunit protein bL17 (175 aa).

The tract at residues 124 to 175 is disordered; sequence VKKSKPTAPAQAVATKPAVEETREAAAAQPQEPEVEISEVKDPAEECEAKAD. Positions 161-175 are enriched in basic and acidic residues; sequence SEVKDPAEECEAKAD.

This sequence belongs to the bacterial ribosomal protein bL17 family. As to quaternary structure, part of the 50S ribosomal subunit. Contacts protein L32.

In Geobacter sulfurreducens (strain ATCC 51573 / DSM 12127 / PCA), this protein is Large ribosomal subunit protein bL17.